The sequence spans 713 residues: Phosphoribosylformylglycinamidine synthase subunit PurL (713 aa).

The active site involves His32. Tyr35 contributes to the ATP binding site. Glu76 provides a ligand contact to Mg(2+). Substrate contacts are provided by residues 77–80 (SHNH) and Arg99. The Proton acceptor role is filled by His78. Position 100 (Asp100) interacts with Mg(2+). Gln224 contributes to the substrate binding site. Asp252 is a Mg(2+) binding site. A substrate-binding site is contributed by 296–298 (ESQ). Residues Asp471 and Gly508 each contribute to the ATP site. Position 509 (Asn509) interacts with Mg(2+). Residue Ser511 participates in substrate binding.

This sequence belongs to the FGAMS family. In terms of assembly, monomer. Part of the FGAM synthase complex composed of 1 PurL, 1 PurQ and 2 PurS subunits.

It is found in the cytoplasm. It catalyses the reaction N(2)-formyl-N(1)-(5-phospho-beta-D-ribosyl)glycinamide + L-glutamine + ATP + H2O = 2-formamido-N(1)-(5-O-phospho-beta-D-ribosyl)acetamidine + L-glutamate + ADP + phosphate + H(+). It functions in the pathway purine metabolism; IMP biosynthesis via de novo pathway; 5-amino-1-(5-phospho-D-ribosyl)imidazole from N(2)-formyl-N(1)-(5-phospho-D-ribosyl)glycinamide: step 1/2. Part of the phosphoribosylformylglycinamidine synthase complex involved in the purines biosynthetic pathway. Catalyzes the ATP-dependent conversion of formylglycinamide ribonucleotide (FGAR) and glutamine to yield formylglycinamidine ribonucleotide (FGAM) and glutamate. The FGAM synthase complex is composed of three subunits. PurQ produces an ammonia molecule by converting glutamine to glutamate. PurL transfers the ammonia molecule to FGAR to form FGAM in an ATP-dependent manner. PurS interacts with PurQ and PurL and is thought to assist in the transfer of the ammonia molecule from PurQ to PurL. This Thermococcus sibiricus (strain DSM 12597 / MM 739) protein is Phosphoribosylformylglycinamidine synthase subunit PurL.